Reading from the N-terminus, the 105-residue chain is Replication restart protein PriB (105 aa).

In terms of domain architecture, SSB spans methionine 1–aspartate 102.

It belongs to the PriB family. In terms of assembly, homodimer. Interacts with PriA and DnaT. Component of the replication restart primosome. Primosome assembly occurs via a 'hand-off' mechanism. PriA binds to replication forks, subsequently PriB then DnaT bind; DnaT then displaces ssDNA to generate the helicase loading substrate.

Involved in the restart of stalled replication forks, which reloads the replicative helicase on sites other than the origin of replication; the PriA-PriB pathway is the major replication restart pathway. During primosome assembly it facilitates complex formation between PriA and DnaT on DNA; stabilizes PriA on DNA. Stimulates the DNA unwinding activity of PriA helicase. This chain is Replication restart protein PriB, found in Serratia proteamaculans (strain 568).